The primary structure comprises 476 residues: Glycogen synthase (476 aa).

Lys-15 is an ADP-alpha-D-glucose binding site.

This sequence belongs to the glycosyltransferase 1 family. Bacterial/plant glycogen synthase subfamily.

It catalyses the reaction [(1-&gt;4)-alpha-D-glucosyl](n) + ADP-alpha-D-glucose = [(1-&gt;4)-alpha-D-glucosyl](n+1) + ADP + H(+). It participates in glycan biosynthesis; glycogen biosynthesis. Its function is as follows. Synthesizes alpha-1,4-glucan chains using ADP-glucose. The chain is Glycogen synthase from Ligilactobacillus salivarius (strain UCC118) (Lactobacillus salivarius).